We begin with the raw amino-acid sequence, 514 residues long: Putative exoglucanase type C (514 aa).

A signal peptide spans 1-17 (MYRIVATASALIAAARA). The tract at residues 18 to 439 (QQVCSLNTET…RDVPNSKVSF (422 aa)) is catalytic. The Nucleophile role is filled by E229. E234 serves as the catalytic Proton donor. N-linked (GlcNAc...) asparagine glycosylation occurs at N287. Residues 408 to 424 (STKVGSQRGSCATTSGK) are compositionally biased toward polar residues. Disordered regions lie at residues 408–433 (STKV…RDVP) and 448–485 (GSTY…QWGQ). A linker region spans residues 440 to 482 (SNIKFGPIGSTYKSDGTTPNPPASSSTTGSSTPTNPPAGSVDQ). Positions 462-479 (ASSSTTGSSTPTNPPAGS) are enriched in low complexity. The CBM1 domain maps to 478–514 (GSVDQWGQCGGQNYSGPTTCKSPFTCKKINDFYSQCQ). Intrachain disulfides connect C486-C503 and C497-C513. A glycan (N-linked (GlcNAc...) asparagine) is linked at N490.

This sequence belongs to the glycosyl hydrolase 7 (cellulase C) family.

The catalysed reaction is Hydrolysis of (1-&gt;4)-beta-D-glucosidic linkages in cellulose and cellotetraose, releasing cellobiose from the non-reducing ends of the chains.. In Fusarium oxysporum (Fusarium vascular wilt), this protein is Putative exoglucanase type C.